The primary structure comprises 80 residues: Serine palmitoyltransferase-regulating protein TSC3 (80 aa).

A helical transmembrane segment spans residues 54–74 (FDSFFLHVFFLTIFSLSFFGI).

As to quaternary structure, interacts with the serine palmitoyltransferase complex LCB1-LCB2. Component of the SPOTS complex, at least composed of LCB1/2 (LCB1 and/or LCB2), ORM1/2 (ORM1 and/or ORM2), SAC1 and TSC3.

The protein resides in the endoplasmic reticulum membrane. Functionally, stimulates the activity of serine palmitoyltransferase (SPT), and thus plays a role in the biosynthesis of sphingolipids. The sequence is that of Serine palmitoyltransferase-regulating protein TSC3 (TSC3) from Saccharomyces cerevisiae (strain ATCC 204508 / S288c) (Baker's yeast).